Consider the following 352-residue polypeptide: Anthranilate phosphoribosyltransferase (352 aa).

Residues Gly96, 99–100, Ser104, 106–109, 124–132, and Ser136 contribute to the 5-phospho-alpha-D-ribose 1-diphosphate site; these read GS, NIST, and KHGNRSVSS. Gly96 serves as a coordination point for anthranilate. Ser108 is a binding site for Mg(2+). Asn127 lines the anthranilate pocket. An anthranilate-binding site is contributed by Arg182. Mg(2+)-binding residues include Asp241 and Glu242.

This sequence belongs to the anthranilate phosphoribosyltransferase family. As to quaternary structure, homodimer. It depends on Mg(2+) as a cofactor.

The catalysed reaction is N-(5-phospho-beta-D-ribosyl)anthranilate + diphosphate = 5-phospho-alpha-D-ribose 1-diphosphate + anthranilate. Its pathway is amino-acid biosynthesis; L-tryptophan biosynthesis; L-tryptophan from chorismate: step 2/5. Catalyzes the transfer of the phosphoribosyl group of 5-phosphorylribose-1-pyrophosphate (PRPP) to anthranilate to yield N-(5'-phosphoribosyl)-anthranilate (PRA). The protein is Anthranilate phosphoribosyltransferase of Syntrophotalea carbinolica (strain DSM 2380 / NBRC 103641 / GraBd1) (Pelobacter carbinolicus).